The following is a 204-amino-acid chain: MTAEAPPDDDIIEPEMLLRAYATGIFPMAEEADDPEVFWVRPEKRGVIPLDGFHIPRSLQKTIRQGIFEIRLDSNFAGVIEGCASGTGERARTWINEPIRRAYAKLFEIGHCHTVEAWYEGKLAGGLYGVTLGRAFFGESMFTRKRDASKVCLAYLVQHLSRQGFVLLDTQFTTPHLERFGALEVPRKEYEEMLERALEGIARF.

This sequence belongs to the L/F-transferase family.

It localises to the cytoplasm. It catalyses the reaction N-terminal L-lysyl-[protein] + L-leucyl-tRNA(Leu) = N-terminal L-leucyl-L-lysyl-[protein] + tRNA(Leu) + H(+). The enzyme catalyses N-terminal L-arginyl-[protein] + L-leucyl-tRNA(Leu) = N-terminal L-leucyl-L-arginyl-[protein] + tRNA(Leu) + H(+). The catalysed reaction is L-phenylalanyl-tRNA(Phe) + an N-terminal L-alpha-aminoacyl-[protein] = an N-terminal L-phenylalanyl-L-alpha-aminoacyl-[protein] + tRNA(Phe). Functions in the N-end rule pathway of protein degradation where it conjugates Leu, Phe and, less efficiently, Met from aminoacyl-tRNAs to the N-termini of proteins containing an N-terminal arginine or lysine. The polypeptide is Leucyl/phenylalanyl-tRNA--protein transferase (Brucella melitensis biotype 2 (strain ATCC 23457)).